The primary structure comprises 506 residues: Alpha-L-fucosidase 1 (506 aa).

Positions 1-23 (MNSQITLFFFFFSILSLSQISNS) are cleaved as a signal peptide. N-linked (GlcNAc...) asparagine glycans are attached at residues Asn-22, Asn-82, Asn-248, Asn-320, Asn-355, and Asn-487.

Belongs to the glycosyl hydrolase 29 family.

It localises to the secreted. The protein resides in the extracellular space. It is found in the apoplast. It carries out the reaction an alpha-L-fucoside + H2O = L-fucose + an alcohol. Hydrolyzes both 3- and 4-linked fucoses in Lewis determinants. Not active on neither 2-linked fucose nor on fucose in alpha-1,3-linkage to the innermost GlcNAc. The polypeptide is Alpha-L-fucosidase 1 (FUC1) (Arabidopsis thaliana (Mouse-ear cress)).